The chain runs to 248 residues: Anamorsin homolog (248 aa).

Residues 4–129 (FKGLQKSLYI…ETGSSARLSF (126 aa)) form an N-terminal SAM-like domain region. The tract at residues 130–161 (AKKNANAANVWKISGDDEELIDEEELLDEEDK) is linker. The [2Fe-2S] cluster site is built by C172, C181, C184, and C186. The segment at 172 to 186 (CSTTGKRKACKNCSC) is fe-S binding site A. 4 residues coordinate [4Fe-4S] cluster: C209, C212, C220, and C223. 2 short sequence motifs (cx2C motif) span residues 209–212 (CGNC) and 220–223 (CSTC). The segment at 209–223 (CGNCYLGDAFRCSTC) is fe-S binding site B.

It belongs to the anamorsin family. As to quaternary structure, monomer. Requires [2Fe-2S] cluster as cofactor. It depends on [4Fe-4S] cluster as a cofactor.

It is found in the cytoplasm. The protein localises to the mitochondrion intermembrane space. Component of the cytosolic iron-sulfur (Fe-S) protein assembly (CIA) machinery. Required for the maturation of extramitochondrial Fe-S proteins. Part of an electron transfer chain functioning in an early step of cytosolic Fe-S biogenesis, facilitating the de novo assembly of a [4Fe-4S] cluster on the cytosolic Fe-S scaffold complex. Electrons are transferred from NADPH via a FAD- and FMN-containing diflavin oxidoreductase. Together with the diflavin oxidoreductase, also required for the assembly of the diferric tyrosyl radical cofactor of ribonucleotide reductase (RNR), probably by providing electrons for reduction during radical cofactor maturation in the catalytic small subunit. The chain is Anamorsin homolog from Drosophila sechellia (Fruit fly).